The chain runs to 725 residues: Methionine--tRNA ligase (725 aa).

Positions 27 to 37 (PYANGQIHIGH) match the 'HIGH' region motif. Zn(2+) is bound by residues Cys-158, Cys-161, Cys-171, and Cys-174. The short motif at 348–352 (KMSKS) is the 'KMSKS' region element. Lys-351 contacts ATP. Positions 619–725 (DFAKIDLRIA…SGAKPGMRVK (107 aa)) constitute a tRNA-binding domain.

It belongs to the class-I aminoacyl-tRNA synthetase family. MetG type 1 subfamily. In terms of assembly, homodimer. Zn(2+) serves as cofactor.

The protein resides in the cytoplasm. The enzyme catalyses tRNA(Met) + L-methionine + ATP = L-methionyl-tRNA(Met) + AMP + diphosphate. In terms of biological role, is required not only for elongation of protein synthesis but also for the initiation of all mRNA translation through initiator tRNA(fMet) aminoacylation. The protein is Methionine--tRNA ligase of Burkholderia pseudomallei (strain 668).